A 569-amino-acid polypeptide reads, in one-letter code: Probable protein phosphatase 2C BIPP2C1 (569 aa).

Disordered regions lie at residues 120 to 214 (EVSP…KVTG) and 251 to 279 (SLDDSEASDGSTTQDFDTDVETESSGSSI). Positions 179–188 (ESERGSDADG) are enriched in basic and acidic residues. The PPM-type phosphatase domain occupies 329 to 564 (AAMLPHPSKV…DDVTVVVSVV (236 aa)). 4 residues coordinate Mn(2+): Asp358, Gly359, Asp488, and Asp555.

This sequence belongs to the PP2C family. Mg(2+) is required as a cofactor. Requires Mn(2+) as cofactor.

It carries out the reaction O-phospho-L-seryl-[protein] + H2O = L-seryl-[protein] + phosphate. The catalysed reaction is O-phospho-L-threonyl-[protein] + H2O = L-threonyl-[protein] + phosphate. In terms of biological role, may play a role in responses to biotic and abiotic stresses. This chain is Probable protein phosphatase 2C BIPP2C1 (BIPP2C1), found in Oryza sativa subsp. japonica (Rice).